The primary structure comprises 194 residues: MRLERLNYNKIKIFLTLDDLTDRGLTKEDLWKDSFKVHQLFKDMMNEANTELGFEANGPIAVEVYSLQAQGMVVIVTKNQDADSEDDEYDDDYIEMQVKLDESADIIYQFHSFEDIIQLSESLQRIGITGGTVYHYDGQYFLSLEDLGSHTAEGVVAVLAEYGNPTTLTIYRLQEYGKLIMDGNAVETIQTHFS.

Belongs to the MecA family. As to quaternary structure, homodimer.

Enables the recognition and targeting of unfolded and aggregated proteins to the ClpC protease or to other proteins involved in proteolysis. Also involved in Spx degradation by ClpC. Acts negatively in the development of competence by binding ComK and recruiting it to the ClpCP protease. When overexpressed, inhibits sporulation. The polypeptide is Adapter protein MecA 2 (mecB) (Bacillus subtilis (strain 168)).